The chain runs to 199 residues: NAD(P)H dehydrogenase (quinone) (199 aa).

The region spanning 4 to 190 (VLVLYYSSYG…TGARYQGRKI (187 aa)) is the Flavodoxin-like domain. FMN contacts are provided by residues 10–15 (SSYGHL) and 78–80 (TRF). NAD(+) is bound at residue Tyr-12. Substrate is bound at residue Trp-98. Residues 113-119 (STATQHG) and His-134 each bind FMN.

The protein belongs to the WrbA family. FMN serves as cofactor.

The catalysed reaction is a quinone + NADH + H(+) = a quinol + NAD(+). It carries out the reaction a quinone + NADPH + H(+) = a quinol + NADP(+). The chain is NAD(P)H dehydrogenase (quinone) from Caulobacter vibrioides (strain ATCC 19089 / CIP 103742 / CB 15) (Caulobacter crescentus).